The chain runs to 607 residues: Elongation factor 4 (607 aa).

The tr-type G domain maps to 11 to 193; the sequence is KNIRNFSIIA…KIVETIPAPS (183 aa). GTP is bound by residues 23 to 28 and 140 to 143; these read DHGKST and NKID.

Belongs to the TRAFAC class translation factor GTPase superfamily. Classic translation factor GTPase family. LepA subfamily.

The protein localises to the cell membrane. The enzyme catalyses GTP + H2O = GDP + phosphate + H(+). In terms of biological role, required for accurate and efficient protein synthesis under certain stress conditions. May act as a fidelity factor of the translation reaction, by catalyzing a one-codon backward translocation of tRNAs on improperly translocated ribosomes. Back-translocation proceeds from a post-translocation (POST) complex to a pre-translocation (PRE) complex, thus giving elongation factor G a second chance to translocate the tRNAs correctly. Binds to ribosomes in a GTP-dependent manner. This chain is Elongation factor 4, found in Staphylococcus carnosus (strain TM300).